Consider the following 946-residue polypeptide: Protein translocase subunit SecA (946 aa).

Residues glutamine 87, 105-109, and aspartate 524 contribute to the ATP site; that span reads GEGKT. Residues 905-926 are disordered; that stretch reads APASDAAQRDPKNPASWGKIGR. Zn(2+) contacts are provided by cysteine 930, cysteine 932, cysteine 941, and histidine 942.

The protein belongs to the SecA family. As to quaternary structure, monomer and homodimer. Part of the essential Sec protein translocation apparatus which comprises SecA, SecYEG and auxiliary proteins SecDF-YajC and YidC. Zn(2+) serves as cofactor.

The protein localises to the cell inner membrane. It localises to the cytoplasm. It catalyses the reaction ATP + H2O + cellular proteinSide 1 = ADP + phosphate + cellular proteinSide 2.. Its function is as follows. Part of the Sec protein translocase complex. Interacts with the SecYEG preprotein conducting channel. Has a central role in coupling the hydrolysis of ATP to the transfer of proteins into and across the cell membrane, serving both as a receptor for the preprotein-SecB complex and as an ATP-driven molecular motor driving the stepwise translocation of polypeptide chains across the membrane. The chain is Protein translocase subunit SecA from Bradyrhizobium diazoefficiens (strain JCM 10833 / BCRC 13528 / IAM 13628 / NBRC 14792 / USDA 110).